The primary structure comprises 202 residues: uncharacterized protein (202 aa).

Disordered stretches follow at residues 1-32 (MRPE…ASLG) and 46-95 (PSSV…PSYT). A compositionally biased stretch (low complexity) spans 47-79 (SSVSLSSSSSRRSMPSLGSSRSSSLPSTGSLRS).

This is an uncharacterized protein from Equus caballus (Horse).